We begin with the raw amino-acid sequence, 466 residues long: D-inositol 3-phosphate glycosyltransferase (466 aa).

Positions 1-12 (MRPMRAGAGAAG) are enriched in low complexity. Residues 1 to 22 (MRPMRAGAGAAGESCKDDGVRP) are disordered. His-43 provides a ligand contact to 1D-myo-inositol 3-phosphate. Residues 49-50 (QP) and Gly-57 contribute to the UDP-N-acetyl-alpha-D-glucosamine site. 1D-myo-inositol 3-phosphate contacts are provided by residues 54–59 (DAGGMN), Lys-112, Tyr-145, Thr-169, and Arg-189. Residues Arg-263, Lys-268, and Gln-321 each contribute to the UDP-N-acetyl-alpha-D-glucosamine site. Residues Phe-330, His-331, and Val-333 each coordinate Mg(2+). Glu-343 and Glu-351 together coordinate UDP-N-acetyl-alpha-D-glucosamine. Residue Thr-357 coordinates Mg(2+). The interval 446-466 (VRDPVAARKPRRWTARRGVGA) is disordered.

The protein belongs to the glycosyltransferase group 1 family. MshA subfamily. In terms of assembly, homodimer.

It catalyses the reaction 1D-myo-inositol 3-phosphate + UDP-N-acetyl-alpha-D-glucosamine = 1D-myo-inositol 2-acetamido-2-deoxy-alpha-D-glucopyranoside 3-phosphate + UDP + H(+). Its function is as follows. Catalyzes the transfer of a N-acetyl-glucosamine moiety to 1D-myo-inositol 3-phosphate to produce 1D-myo-inositol 2-acetamido-2-deoxy-glucopyranoside 3-phosphate in the mycothiol biosynthesis pathway. This chain is D-inositol 3-phosphate glycosyltransferase, found in Mycobacterium marinum (strain ATCC BAA-535 / M).